The following is a 128-amino-acid chain: Large ribosomal subunit protein bL12 (128 aa).

The protein belongs to the bacterial ribosomal protein bL12 family. As to quaternary structure, homodimer. Part of the ribosomal stalk of the 50S ribosomal subunit. Forms a multimeric L10(L12)X complex, where L10 forms an elongated spine to which 2 to 4 L12 dimers bind in a sequential fashion. Binds GTP-bound translation factors.

Forms part of the ribosomal stalk which helps the ribosome interact with GTP-bound translation factors. Is thus essential for accurate translation. This is Large ribosomal subunit protein bL12 from Acidithiobacillus ferrooxidans (strain ATCC 23270 / DSM 14882 / CIP 104768 / NCIMB 8455) (Ferrobacillus ferrooxidans (strain ATCC 23270)).